A 254-amino-acid polypeptide reads, in one-letter code: Cell wall biogenesis protein NCW2 (254 aa).

The N-terminal stretch at 1–17 (MKACSILFTTLITLAAA) is a signal peptide. Disordered regions lie at residues 19 to 57 (KDSGSLDGQNSEDSSQKESSNSQEITPTTTKEAQESAST), 111 to 143 (TSTASVQPTGETSSGITNSASSSTTSTSTDGPV), and 167 to 191 (ATTDNTASSSKSSSGSSSKPESSTK). Residues 27–42 (QNSEDSSQKESSNSQE) are compositionally biased toward low complexity. The span at 43 to 57 (ITPTTTKEAQESAST) shows a compositional bias: polar residues. Low complexity predominate over residues 111-139 (TSTASVQPTGETSSGITNSASSSTTSTST). A glycan (N-linked (GlcNAc...) asparagine) is linked at Asn-229. The GPI-anchor amidated asparagine moiety is linked to residue Asn-232. The propeptide at 233 to 254 (GAFAGTHIAYGAGAFAVGALLL) is removed in mature form.

The protein resides in the cell membrane. In terms of biological role, cell wall biogenesis protein that participates in the organization of the beta-glucan assembly. Involved in the mechanism responsible for cell tolerance to polyhexamethylene biguanide (PHMB), an antifungal agent. In Saccharomyces cerevisiae (strain ATCC 204508 / S288c) (Baker's yeast), this protein is Cell wall biogenesis protein NCW2.